Reading from the N-terminus, the 180-residue chain is ATP synthase subunit delta (180 aa).

It belongs to the ATPase delta chain family. F-type ATPases have 2 components, F(1) - the catalytic core - and F(0) - the membrane proton channel. F(1) has five subunits: alpha(3), beta(3), gamma(1), delta(1), epsilon(1). F(0) has three main subunits: a(1), b(2) and c(10-14). The alpha and beta chains form an alternating ring which encloses part of the gamma chain. F(1) is attached to F(0) by a central stalk formed by the gamma and epsilon chains, while a peripheral stalk is formed by the delta and b chains.

Its subcellular location is the cell membrane. In terms of biological role, f(1)F(0) ATP synthase produces ATP from ADP in the presence of a proton or sodium gradient. F-type ATPases consist of two structural domains, F(1) containing the extramembraneous catalytic core and F(0) containing the membrane proton channel, linked together by a central stalk and a peripheral stalk. During catalysis, ATP synthesis in the catalytic domain of F(1) is coupled via a rotary mechanism of the central stalk subunits to proton translocation. Its function is as follows. This protein is part of the stalk that links CF(0) to CF(1). It either transmits conformational changes from CF(0) to CF(1) or is implicated in proton conduction. The sequence is that of ATP synthase subunit delta from Dehalococcoides mccartyi (strain ATCC BAA-2266 / KCTC 15142 / 195) (Dehalococcoides ethenogenes (strain 195)).